A 151-amino-acid polypeptide reads, in one-letter code: Epigen (151 aa).

The first 18 residues, 1–18, serve as a signal peptide directing secretion; that stretch reads MAFGMLIYILLKAMGALS. Topologically, residues 19–108 are extracellular; sequence EEAALTASSL…NSYAHNSYER (90 aa). An N-linked (GlcNAc...) asparagine glycan is attached at Asn-39. The 41-residue stretch at 54-94 folds into the EGF-like domain; sequence LMQTCLEEHHSYCINGLCAFHSELRKPICKCLAGYNGERCE. Disulfide bonds link Cys-58-Cys-71, Cys-66-Cys-82, and Cys-84-Cys-93. A helical transmembrane segment spans residues 109–129; that stretch reads YIAVGIGIGILTSGILAIIYC. At 130-151 the chain is on the cytoplasmic side; it reads YVRKRCRKLKSPYKVCMGETAL.

The protein localises to the membrane. Functionally, promotes the growth of epithelial cells. This chain is Epigen (EPGN), found in Gallus gallus (Chicken).